A 426-amino-acid polypeptide reads, in one-letter code: uncharacterized protein (426 aa).

Residue H277 participates in Zn(2+) binding. Residue E278 is part of the active site. Residues H281 and E357 each contribute to the Zn(2+) site.

It belongs to the peptidase M48B family. Requires Zn(2+) as cofactor.

This is an uncharacterized protein from Bacillus subtilis (strain 168).